The sequence spans 53 residues: Antilisterial bacteriocin subtilosin biosynthesis protein AlbB (53 aa).

The next 2 helical transmembrane spans lie at 8-28 (ILLY…FVKS) and 30-50 (YLFT…ARKA).

The protein localises to the cell membrane. Its function is as follows. Involved in the production of the bacteriocin subtilosin. Required for maximal production and for optimal immunity to subtilosin. The chain is Antilisterial bacteriocin subtilosin biosynthesis protein AlbB (albB) from Bacillus subtilis (strain 168).